The sequence spans 178 residues: Caveolin-1 (178 aa).

The residue at position 2 (S2) is an N-acetylserine. S2 carries the post-translational modification Phosphoserine. The required for homooligomerization stretch occupies residues 2–94 (SGGKYVDSEG…WKASFTTFTV (93 aa)). Residues 2-104 (SGGKYVDSEG…TKYWFYRLLS (103 aa)) are Cytoplasmic-facing. K5 carries the post-translational modification N6-acetyllysine; alternate. A Glycyl lysine isopeptide (Lys-Gly) (interchain with G-Cter in ubiquitin); alternate cross-link involves residue K5. Y6 carries the post-translational modification Phosphotyrosine. A Phosphoserine modification is found at S9. Y14 is modified (phosphotyrosine; by ABL1). The residue at position 25 (Y25) is a Phosphotyrosine. Glycyl lysine isopeptide (Lys-Gly) (interchain with G-Cter in ubiquitin) cross-links involve residues K26, K30, K39, K47, and K57. The interval 82–94 (DGIWKASFTTFTV) is interaction with CAVIN3. An intramembrane region (helical) is located at residues 105–125 (TIFGIPMALIWGIYFAILSFL). The Cytoplasmic segment spans residues 126–178 (HIWAVVPCIKSFLIEIQCISRVYSIYVHTFCDPLFEAIGKIFSNVRISMQKEI). The segment at 131–142 (VPCIKSFLIEIQ) is interacts with SPRY1, SPRY2, SPRY3 and SPRY4. S-palmitoyl cysteine attachment occurs at residues C133, C143, and C156. Residues 149–160 (SIYVHTFCDPLF) are interacts with SPRY1, SPRY2, and SPRY4. The interacts with SPRY1, SPRY2, SPRY3 and SPRY4 stretch occupies residues 167 to 178 (FSNVRISMQKEI).

This sequence belongs to the caveolin family. In terms of assembly, homooligomer. Interacts with GLIPR2. Interacts with NOSTRIN. Interacts with SNAP25 and STX1A. Interacts (via the N-terminus) with DPP4; the interaction is direct. Interacts with CTNNB1, CDH1 and JUP. Interacts with PACSIN2; this interaction induces membrane tubulation. Interacts with SLC7A9. Interacts with BMX and BTK. Interacts with TGFBR1. Interacts with CAVIN3 (via leucine-zipper domain) in a cholesterol-sensitive manner. Interacts with CAVIN1. Interacts with EHD2 in a cholesterol-dependent manner. Forms a ternary complex with UBXN6 and VCP; mediates CAV1 targeting to lysosomes for degradation. Interacts with ABCG1; this interaction regulates ABCG1-mediated cholesterol efflux. Interacts with NEU3; this interaction enhances NEU3 sialidase activity within caveola. Interacts (via C-terminus) with SPRY1, SPRY2 (via C-terminus), SPRY3, and SPRY4. Interacts with IGFBP5; this interaction allows trafficking of IGFBP5 from the plasma membrane to the nucleus. Post-translationally, phosphorylated at Tyr-14 by ABL1 in response to oxidative stress. Ubiquitinated. Undergo monoubiquitination and multi- and/or polyubiquitination. Monoubiquitination of N-terminal lysines promotes integration in a ternary complex with UBXN6 and VCP which promotes oligomeric CAV1 targeting to lysosomes for degradation. Ubiquitinated by ZNRF1; leading to degradation and modulation of the TLR4-mediated immune response.

The protein resides in the golgi apparatus membrane. Its subcellular location is the cell membrane. It localises to the membrane. The protein localises to the caveola. It is found in the membrane raft. Its function is as follows. May act as a scaffolding protein within caveolar membranes. Forms a stable heterooligomeric complex with CAV2 that targets to lipid rafts and drives caveolae formation. Mediates the recruitment of CAVIN proteins (CAVIN1/2/3/4) to the caveolae. Interacts directly with G-protein alpha subunits and can functionally regulate their activity. Involved in the costimulatory signal essential for T-cell receptor (TCR)-mediated T-cell activation. Its binding to DPP4 induces T-cell proliferation and NF-kappa-B activation in a T-cell receptor/CD3-dependent manner. Recruits CTNNB1 to caveolar membranes and may regulate CTNNB1-mediated signaling through the Wnt pathway. Negatively regulates TGFB1-mediated activation of SMAD2/3 by mediating the internalization of TGFBR1 from membrane rafts leading to its subsequent degradation. Binds 20(S)-hydroxycholesterol (20(S)-OHC). The sequence is that of Caveolin-1 (CAV1) from Oryctolagus cuniculus (Rabbit).